We begin with the raw amino-acid sequence, 976 residues long: Poly(ADP-ribose) glycohydrolase (976 aa).

Residue Met-1 is modified to N-acetylmethionine. Positions 1-69 are disordered; that stretch reads MNAGPGCEPC…GRAGQHRGSA (69 aa). Residues 1 to 456 form an A-domain region; sequence MNAGPGCEPC…LSPDKKWLGT (456 aa). A Nuclear localization signal motif is present at residues 10 to 16; the sequence is CTKRPRW. At Ser-22 the chain carries Phosphoserine. The span at 37-46 shows a compositional bias: basic and acidic residues; the sequence is RVLDPKDAHV. Phosphoserine is present on Ser-68. A PIP-box (PCNA interacting peptide) motif is present at residues 76–83; it reads QKTITSWM. Phosphoserine is present on residues Ser-133 and Ser-137. The residue at position 139 (Thr-139) is a Phosphothreonine. A disordered region spans residues 183–350; it reads SNANIDRSPQ…PSRFQARDAD (168 aa). Basic and acidic residues-rich tracts occupy residues 191–206 and 222–233; these read PQND…ENRD and TTEDEQAREAKS. Ser-197 is subject to Phosphoserine. Thr-199 is subject to Phosphothreonine. 7 positions are modified to phosphoserine: Ser-261, Ser-264, Ser-286, Ser-291, Ser-298, Ser-302, and Ser-316. Acidic residues predominate over residues 316–331; it reads SEADEETSPGFDEQED. A compositionally biased stretch (polar residues) spans 332–342; sequence GSSSQTANKPS. Lys-340 carries the N6-acetyllysine modification. Ser-448 is modified (phosphoserine). A catalytic region spans residues 610-795; it reads QPIPLLKQKM…TEQYSEYTGY (186 aa). A substrate-binding site is contributed by 726-727; that stretch reads IE. Asp-737 is a catalytic residue. Asn-740 and Gln-754 together coordinate substrate. Catalysis depends on residues Glu-755 and Glu-756. Substrate is bound by residues Tyr-795 and 869-874; that span reads NWGCGA.

Belongs to the poly(ADP-ribose) glycohydrolase family. In terms of assembly, interacts with PCNA. Interacts with NUDT5. As to expression, ubiquitously expressed.

It is found in the nucleus. Its subcellular location is the cytoplasm. The protein localises to the mitochondrion. It localises to the mitochondrion matrix. It carries out the reaction [(1''-&gt;2')-ADP-alpha-D-ribose](n) + H2O = [(1''-&gt;2')-ADP-alpha-D-ribose](n-1) + ADP-D-ribose. In terms of biological role, poly(ADP-ribose) glycohydrolase that degrades poly(ADP-ribose) by hydrolyzing the ribose-ribose bonds present in poly(ADP-ribose). PARG acts both as an endo- and exoglycosidase, releasing poly(ADP-ribose) of different length as well as ADP-ribose monomers. It is however unable to cleave the ester bond between the terminal ADP-ribose and ADP-ribosylated residues, leaving proteins that are mono-ADP-ribosylated. Poly(ADP-ribose) is synthesized after DNA damage is only present transiently and is rapidly degraded by PARG. Required to prevent detrimental accumulation of poly(ADP-ribose) upon prolonged replicative stress, while it is not required for recovery from transient replicative stress. Responsible for the prevalence of mono-ADP-ribosylated proteins in cells, thanks to its ability to degrade poly(ADP-ribose) without cleaving the terminal protein-ribose bond. Required for retinoid acid-dependent gene transactivation, probably by removing poly(ADP-ribose) from histone demethylase KDM4D, allowing chromatin derepression at RAR-dependent gene promoters. Involved in the synthesis of ATP in the nucleus, together with PARP1, NMNAT1 and NUDT5. Nuclear ATP generation is required for extensive chromatin remodeling events that are energy-consuming. This is Poly(ADP-ribose) glycohydrolase from Homo sapiens (Human).